The primary structure comprises 276 residues: 4-diphosphocytidyl-2-C-methyl-D-erythritol kinase (276 aa).

The active site involves K13. 94–104 (PHAGGIGGGSA) contacts ATP. D131 is a catalytic residue.

It belongs to the GHMP kinase family. IspE subfamily.

It catalyses the reaction 4-CDP-2-C-methyl-D-erythritol + ATP = 4-CDP-2-C-methyl-D-erythritol 2-phosphate + ADP + H(+). It participates in isoprenoid biosynthesis; isopentenyl diphosphate biosynthesis via DXP pathway; isopentenyl diphosphate from 1-deoxy-D-xylulose 5-phosphate: step 3/6. In terms of biological role, catalyzes the phosphorylation of the position 2 hydroxy group of 4-diphosphocytidyl-2C-methyl-D-erythritol. The chain is 4-diphosphocytidyl-2-C-methyl-D-erythritol kinase from Jannaschia sp. (strain CCS1).